The primary structure comprises 426 residues: Endoglucanase Z (426 aa).

The signal sequence occupies residues 1–43 (MPLSYLDKNPVIDSKKHALRKKLFLSCAYFGLSLACLSSNAWA). Residues 44–332 (SVEPLSVNGN…VKSIIQSWPY (289 aa)) are catalytic. The active-site Proton donor is the E176. E263 serves as the catalytic Nucleophile. Residues 333–366 (KAGSAASATTDPSTDTTTDTTVDEPTTTDTPATA) are linker. A disordered region spans residues 336 to 367 (SAASATTDPSTDTTTDTTVDEPTTTDTPATAD). Residues 367-426 (DCANANVYPNWVSKDWAGGQPTHNEAGQSIVYKGNLYTANWYTASVPGSDSSWTQVGSCN) form a cellulose-binding region. A disulfide bridge connects residues C368 and C425.

This sequence belongs to the glycosyl hydrolase 5 (cellulase A) family.

It localises to the secreted. The catalysed reaction is Endohydrolysis of (1-&gt;4)-beta-D-glucosidic linkages in cellulose, lichenin and cereal beta-D-glucans.. Its function is as follows. Represents 97% of the global cellulase activity. The polypeptide is Endoglucanase Z (celZ) (Dickeya dadantii (strain 3937) (Erwinia chrysanthemi (strain 3937))).